The sequence spans 414 residues: 5-aminolevulinate synthase (414 aa).

Residues arginine 22, serine 133, and lysine 152 each contribute to the substrate site. Pyridoxal 5'-phosphate contacts are provided by serine 185, histidine 213, and threonine 241. Lysine 244 is an active-site residue. Lysine 244 carries the N6-(pyridoxal phosphate)lysine modification. Pyridoxal 5'-phosphate is bound by residues threonine 273 and threonine 274. Threonine 359 is a binding site for substrate.

The protein belongs to the class-II pyridoxal-phosphate-dependent aminotransferase family. In terms of assembly, homodimer. Pyridoxal 5'-phosphate serves as cofactor.

The catalysed reaction is succinyl-CoA + glycine + H(+) = 5-aminolevulinate + CO2 + CoA. The protein operates within porphyrin-containing compound metabolism; protoporphyrin-IX biosynthesis; 5-aminolevulinate from glycine: step 1/1. The sequence is that of 5-aminolevulinate synthase (hemA) from Rickettsia prowazekii (strain Madrid E).